The following is a 105-amino-acid chain: Small ribosomal subunit protein uS10 (105 aa).

The protein belongs to the universal ribosomal protein uS10 family. Part of the 30S ribosomal subunit.

Functionally, involved in the binding of tRNA to the ribosomes. The polypeptide is Small ribosomal subunit protein uS10 (Desulfovibrio desulfuricans (strain ATCC 27774 / DSM 6949 / MB)).